The following is a 119-amino-acid chain: Membrane-anchored ubiquitin-fold protein 6 (119 aa).

The Ubiquitin-like domain maps to 8-76 (IELKFRLADG…NNRTLAESRL (69 aa)). The S-palmitoyl cysteine moiety is linked to residue Cys114. Cys116 carries the post-translational modification Cysteine methyl ester. The S-geranylgeranyl cysteine moiety is linked to residue Cys116. Residues 117–119 (TIL) constitute a propeptide, removed in mature form.

Ubiquitous.

It is found in the cell membrane. May serve as docking site to facilitate the association of other proteins to the plasma membrane. The sequence is that of Membrane-anchored ubiquitin-fold protein 6 (MUB6) from Arabidopsis thaliana (Mouse-ear cress).